We begin with the raw amino-acid sequence, 268 residues long: Kynurenine formamidase (268 aa).

The HGGXW motif lies at 33–37 (HGGGW). Catalysis depends on Ser-107, which acts as the Nucleophile. Active-site residues include Asp-219 and His-251.

Belongs to the kynurenine formamidase family. In terms of assembly, homodimer.

It catalyses the reaction N-formyl-L-kynurenine + H2O = L-kynurenine + formate + H(+). It participates in amino-acid degradation; L-tryptophan degradation via kynurenine pathway; L-kynurenine from L-tryptophan: step 2/2. Its function is as follows. Catalyzes the hydrolysis of N-formyl-L-kynurenine to L-kynurenine, the second step in the kynurenine pathway of tryptophan degradation. Kynurenine may be further oxidized to nicotinic acid, NAD(H) and NADP(H). Required for elimination of toxic metabolites. The sequence is that of Kynurenine formamidase from Scheffersomyces stipitis (strain ATCC 58785 / CBS 6054 / NBRC 10063 / NRRL Y-11545) (Yeast).